The sequence spans 82 residues: UPF0154 protein SMU_1719c (82 aa).

The helical transmembrane segment at 4–24 (FLWILLVIIALLAGLVGGTFI) threads the bilayer.

The protein belongs to the UPF0154 family.

The protein resides in the membrane. The protein is UPF0154 protein SMU_1719c of Streptococcus mutans serotype c (strain ATCC 700610 / UA159).